The following is a 316-amino-acid chain: Porphobilinogen deaminase (316 aa).

C245 bears the S-(dipyrrolylmethanemethyl)cysteine mark.

This sequence belongs to the HMBS family. In terms of assembly, monomer. Requires dipyrromethane as cofactor.

The catalysed reaction is 4 porphobilinogen + H2O = hydroxymethylbilane + 4 NH4(+). It functions in the pathway porphyrin-containing compound metabolism; protoporphyrin-IX biosynthesis; coproporphyrinogen-III from 5-aminolevulinate: step 2/4. Its pathway is porphyrin-containing compound metabolism; chlorophyll biosynthesis. Its function is as follows. Tetrapolymerization of the monopyrrole PBG into the hydroxymethylbilane pre-uroporphyrinogen in several discrete steps. The sequence is that of Porphobilinogen deaminase from Prochlorococcus marinus subsp. pastoris (strain CCMP1986 / NIES-2087 / MED4).